The primary structure comprises 729 residues: DNA topoisomerase 3 (729 aa).

A Toprim domain is found at Lys-3–Thr-136. Residues Glu-9 and Asp-105 each coordinate Mg(2+). The region spanning Tyr-153–Val-594 is the Topo IA-type catalytic domain. Residues Asn-187–Gln-192 are interaction with DNA. The active-site O-(5'-phospho-DNA)-tyrosine intermediate is the Tyr-310. Residues Glu-686–Glu-713 show a composition bias toward basic and acidic residues. The segment at Glu-686–Pro-718 is disordered.

It belongs to the type IA topoisomerase family. Mg(2+) is required as a cofactor.

It carries out the reaction ATP-independent breakage of single-stranded DNA, followed by passage and rejoining.. Releases the supercoiling and torsional tension of DNA, which is introduced during the DNA replication and transcription, by transiently cleaving and rejoining one strand of the DNA duplex. Introduces a single-strand break via transesterification at a target site in duplex DNA. The scissile phosphodiester is attacked by the catalytic tyrosine of the enzyme, resulting in the formation of a DNA-(5'-phosphotyrosyl)-enzyme intermediate and the expulsion of a 3'-OH DNA strand. The free DNA strand then undergoes passage around the unbroken strand, thus removing DNA supercoils. Finally, in the religation step, the DNA 3'-OH attacks the covalent intermediate to expel the active-site tyrosine and restore the DNA phosphodiester backbone. The chain is DNA topoisomerase 3 from Bacillus thuringiensis subsp. konkukian (strain 97-27).